Here is a 199-residue protein sequence, read N- to C-terminus: Molybdenum cofactor guanylyltransferase (199 aa).

GTP contacts are provided by residues 12-14 (LAG), Lys-25, Asn-53, Asp-71, and Asp-101. Asp-101 lines the Mg(2+) pocket.

It belongs to the MobA family. Monomer. Requires Mg(2+) as cofactor.

Its subcellular location is the cytoplasm. It carries out the reaction Mo-molybdopterin + GTP + H(+) = Mo-molybdopterin guanine dinucleotide + diphosphate. In terms of biological role, transfers a GMP moiety from GTP to Mo-molybdopterin (Mo-MPT) cofactor (Moco or molybdenum cofactor) to form Mo-molybdopterin guanine dinucleotide (Mo-MGD) cofactor. The polypeptide is Molybdenum cofactor guanylyltransferase (Polynucleobacter asymbioticus (strain DSM 18221 / CIP 109841 / QLW-P1DMWA-1) (Polynucleobacter necessarius subsp. asymbioticus)).